Reading from the N-terminus, the 395-residue chain is ATP phosphoribosyltransferase regulatory subunit (395 aa).

The protein belongs to the class-II aminoacyl-tRNA synthetase family. HisZ subfamily. In terms of assembly, heteromultimer composed of HisG and HisZ subunits.

The protein resides in the cytoplasm. It participates in amino-acid biosynthesis; L-histidine biosynthesis; L-histidine from 5-phospho-alpha-D-ribose 1-diphosphate: step 1/9. Functionally, required for the first step of histidine biosynthesis. May allow the feedback regulation of ATP phosphoribosyltransferase activity by histidine. In Stutzerimonas stutzeri (Pseudomonas stutzeri), this protein is ATP phosphoribosyltransferase regulatory subunit.